We begin with the raw amino-acid sequence, 1319 residues long: DNA-directed RNA polymerase subunit beta' (1319 aa).

Cysteine 60, cysteine 62, cysteine 75, and cysteine 78 together coordinate Zn(2+). The Mg(2+) site is built by aspartate 535, aspartate 537, and aspartate 539. Zn(2+) is bound by residues cysteine 890, cysteine 971, cysteine 978, and cysteine 981.

The protein belongs to the RNA polymerase beta' chain family. In terms of assembly, the RNAP catalytic core consists of 2 alpha, 1 beta, 1 beta' and 1 omega subunit. When a sigma factor is associated with the core the holoenzyme is formed, which can initiate transcription. Requires Mg(2+) as cofactor. Zn(2+) serves as cofactor.

The catalysed reaction is RNA(n) + a ribonucleoside 5'-triphosphate = RNA(n+1) + diphosphate. DNA-dependent RNA polymerase catalyzes the transcription of DNA into RNA using the four ribonucleoside triphosphates as substrates. The polypeptide is DNA-directed RNA polymerase subunit beta' (Mycobacteroides abscessus (strain ATCC 19977 / DSM 44196 / CCUG 20993 / CIP 104536 / JCM 13569 / NCTC 13031 / TMC 1543 / L948) (Mycobacterium abscessus)).